The primary structure comprises 95 residues: Probable FAD-linked sulfhydryl oxidase OPG072 (95 aa).

At 1-8 the chain is on the intravirion side; the sequence is MNPKHWGR. The ERV/ALR sulfhydryl oxidase domain occupies 1 to 95; that stretch reads MNPKHWGRAV…AIDVSKVKPL (95 aa). The helical transmembrane segment at 9–25 threads the bilayer; sequence AVWTIIFIVLSQAGLDG. At 26–95 the chain is on the virion surface side; it reads NIEACKRKLY…AIDVSKVKPL (70 aa). Cysteine 43 and cysteine 46 are disulfide-bonded.

It belongs to the orthopoxvirus OPG072 family. In terms of assembly, interacts with OPG128; this interaction involves formation of a transient disulfide-bonded intermediate, allowing disulfide bond transfer. FAD is required as a cofactor.

The protein localises to the virion membrane. It is found in the host cytoplasm. It carries out the reaction 2 R'C(R)SH + O2 = R'C(R)S-S(R)CR' + H2O2. FAD-dependent sulfhydryl oxidase that catalyzes disulfide bond formation. The complete pathway for formation of disulfide bonds in intracellular virion membrane proteins sequentially involves thiol-disulfide transfer between OPG072, OPG128 and OPG088. The protein is Probable FAD-linked sulfhydryl oxidase OPG072 (OPG072) of Vaccinia virus (strain Copenhagen) (VACV).